The primary structure comprises 294 residues: Shell matrix protein (294 aa).

In terms of tissue distribution, component of the organic matrix of calcified shell layers like nacre and prisms.

It is found in the secreted. In Mytilus californianus (California mussel), this protein is Shell matrix protein.